The following is a 473-amino-acid chain: MMPGVYALLLLWGLATPCLGLLETVGTLARIDKDELGKAIQNSLVGGPILQNVLGTVTSVNQGLLGAGGLLGGGGLLSYGGLFSLVEELSGLKIEELTLPTVSIKLLPGVGVQLSLHTKVSLHGSGPLVGLLQLAAEVNVSSKVALGMSPRGTPILILKRCNTLLGHISLTSGLLPTPIFGLVEQTLCKVLPGLLCPVVDSVLSVVNELLGATLSLVPLGPLGSVEFTLATLPLISNQYIELDINPIVKSIAGDVIDFPKPRLPVKMPPKEDHTSQVTVPLYLFNTVFGLLQTNGALDLDITPEMVPRNIPLTTTDLAALAPEALGKLPPGQHLLLSLRVMKSPMILLQNKKVTVSIPVTIHVLSSVPQGTPVALFQMNGVMTLNAHLVPSTTKLHISLSLERLTVQLASSFSQPFDASRLEEWLSDVVRAAYMQKLNEHLEVGIPLPKILNVNFANSVVDVIENAVVLTVAP.

The signal sequence occupies residues 1–20 (MMPGVYALLLLWGLATPCLG). An N-linked (GlcNAc...) asparagine glycan is attached at asparagine 139. Cysteine 161 and cysteine 196 are disulfide-bonded.

Belongs to the BPI/LBP/Plunc superfamily. BPI/LBP family. Highly expressed in olfactory mucosa but undetectable in thymus, kidney, lung, brain, spleen and liver.

The protein resides in the secreted. Functionally, may have the capacity to recognize and bind specific classes of odorants. May act as a carrier molecule, transporting odorants across the mucus layer to access receptor sites. May serve as a primary defense mechanism by recognizing and removing potentially harmful odorants or pathogenic microorganisms from the mucosa or clearing excess odorant from mucus to enable new odorant stimuli to be received. This is BPI fold-containing family B member 3 from Rattus norvegicus (Rat).